Reading from the N-terminus, the 79-residue chain is uncharacterized protein (79 aa).

A helical membrane pass occupies residues 53 to 73 (LFFAYMVAYIGFGILSIGMIV).

Its subcellular location is the membrane. This is an uncharacterized protein from Escherichia coli O157:H7.